We begin with the raw amino-acid sequence, 257 residues long: tRNA (guanine-N(7)-)-methyltransferase (257 aa).

Acidic residues predominate over residues 1-12 (MARDSEDQDMET). The segment at 1–25 (MARDSEDQDMETETNGAAEGLDPTS) is disordered. Residues glycine 80, 103–104 (EI), 138–139 (NA), and leucine 158 each bind S-adenosyl-L-methionine. Aspartate 161 is an active-site residue. 236 to 238 (SEE) is a binding site for S-adenosyl-L-methionine.

This sequence belongs to the class I-like SAM-binding methyltransferase superfamily. TrmB family.

The protein resides in the nucleus. It catalyses the reaction guanosine(46) in tRNA + S-adenosyl-L-methionine = N(7)-methylguanosine(46) in tRNA + S-adenosyl-L-homocysteine. The protein operates within tRNA modification; N(7)-methylguanine-tRNA biosynthesis. In terms of biological role, catalyzes the formation of N(7)-methylguanine at position 46 (m7G46) in tRNA. In Drosophila ananassae (Fruit fly), this protein is tRNA (guanine-N(7)-)-methyltransferase.